A 119-amino-acid polypeptide reads, in one-letter code: Large ribosomal subunit protein bL20 (119 aa).

This sequence belongs to the bacterial ribosomal protein bL20 family.

In terms of biological role, binds directly to 23S ribosomal RNA and is necessary for the in vitro assembly process of the 50S ribosomal subunit. It is not involved in the protein synthesizing functions of that subunit. This is Large ribosomal subunit protein bL20 from Thermoanaerobacter pseudethanolicus (strain ATCC 33223 / 39E) (Clostridium thermohydrosulfuricum).